The chain runs to 444 residues: Multidrug resistance protein MdtA (444 aa).

The first 20 residues, 1–20 (MKSQSKRTSRLFVFVGGVVA), serve as a signal peptide directing secretion. Residues 37–52 (NNTSGAQQSARGQDTS) show a composition bias toward polar residues. Disordered regions lie at residues 37–60 (NNTS…RNTP) and 398–444 (TPRS…AEKS). Residues 406-419 (ANPASAEKAAAEAE) are compositionally biased toward low complexity. The segment covering 435–444 (ARSTTAAEKS) has biased composition (polar residues).

This sequence belongs to the membrane fusion protein (MFP) (TC 8.A.1) family. In terms of assembly, part of a tripartite efflux system composed of MdtA, MdtB and MdtC.

It is found in the cell inner membrane. The polypeptide is Multidrug resistance protein MdtA (Yersinia pseudotuberculosis serotype O:1b (strain IP 31758)).